We begin with the raw amino-acid sequence, 452 residues long: MDRRIFGLENEYGVTCVFRGQRRLSPDEVARYLFRRVVSWGRSSNVFLKNGARLYLDVGSHPEYATPECDSVPDLVTHDKAGERILEGLLVEAERRLREEGIAGDIHLFKNNTDSAGNSYGCHENYLVGRHGEFSRLADVLVPFLVSRQILCGAGKVLQTPRGAVYCISQRAEHIWESVSSATTRSRPIINTRDEPHADAERFRRLHVIVGDSNMSETTMLLKLGSTDLVLRMIEAGVVLRDMSLENPIRAIREVSHDMTCQRRIKLANGREVSALDIQREYYSKAVEFVERRGGDAVAKRVLDLWGRTLLAIETEDLELVAREIDWVTKFVLIDRFRLKHGLSLASPRVAELDLKYHDIHRDRGLYYRMERAGLVERVTRDLDIFEAKSVPPQTTRARLRGEFIKRAQEKRRDFTVDWVHLKLNDQAQRTVLCKDPFRSVDDRVDKLIASM.

E9 contributes to the Mg(2+) binding site. R53 lines the ATP pocket. A Mg(2+)-binding site is contributed by Y55. Residue D57 is the Proton acceptor of the active site. E63 lines the Mg(2+) pocket. 2 residues coordinate ATP: T66 and W419.

This sequence belongs to the Pup ligase/Pup deamidase family. Pup-conjugating enzyme subfamily.

The enzyme catalyses ATP + [prokaryotic ubiquitin-like protein]-L-glutamate + [protein]-L-lysine = ADP + phosphate + N(6)-([prokaryotic ubiquitin-like protein]-gamma-L-glutamyl)-[protein]-L-lysine.. It functions in the pathway protein degradation; proteasomal Pup-dependent pathway. It participates in protein modification; protein pupylation. Functionally, catalyzes the covalent attachment of the prokaryotic ubiquitin-like protein modifier Pup to the proteasomal substrate proteins, thereby targeting them for proteasomal degradation. This tagging system is termed pupylation. The ligation reaction involves the side-chain carboxylate of the C-terminal glutamate of Pup and the side-chain amino group of a substrate lysine. This is Pup--protein ligase from Parafrankia sp. (strain EAN1pec).